Here is an 87-residue protein sequence, read N- to C-terminus: uncharacterized protein (87 aa).

2 helical membrane passes run 25–45 and 53–73; these read LVAAVIAVTMALWLGVQWLGG and YAFLADLAAIGALIWSLLVTF.

The protein resides in the cell membrane. This is an uncharacterized protein from Paracoccus denitrificans.